The following is a 434-amino-acid chain: Nuclear receptor subfamily 1 group I member 2 (434 aa).

Positions 38–107 form a DNA-binding region, nuclear receptor; sequence PQICRVCGDK…RLRKCLESGM (70 aa). 2 NR C4-type zinc fingers span residues 41–61 and 77–102; these read CRVC…CEGC and CPFR…LRKC. A Bipartite nuclear localization signal motif is present at residues 66-92; that stretch reads RRAMKRNARLRCPFRKGACEITRKTRR. Positions 108-145 are hinge; it reads KKEMIMSDEAVEERRALIKRKKSERTGTQPLGVQGLTE. The 288-residue stretch at 146 to 433 folds into the NR LBD domain; that stretch reads EQRMMIRELM…LMQELFGITG (288 aa). Residues Ser247, 285–288, and His407 contribute to the hyperforin site; that span reads QLRF.

This sequence belongs to the nuclear hormone receptor family. NR1 subfamily. In terms of assembly, heterodimer with RXR. Interacts with NCOA1. Interacts (via domain NR LBD) with CRY1 and CRY2 in a ligand-dependent manner. Expressed in liver, colon and small intestine.

Its subcellular location is the nucleus. Functionally, nuclear receptor that binds and is activated by variety of endogenous and xenobiotic compounds. Transcription factor that activates the transcription of multiple genes involved in the metabolism and secretion of potentially harmful xenobiotics, drugs and endogenous compounds. Activated by the antibiotic rifampicin and various plant metabolites, such as hyperforin, guggulipid, colupulone, and isoflavones. Response to specific ligands is species-specific. Activated by naturally occurring steroids, such as pregnenolone and progesterone. Binds to a response element in the promoters of the CYP3A4 and ABCB1/MDR1 genes. This is Nuclear receptor subfamily 1 group I member 2 (NR1I2) from Homo sapiens (Human).